The primary structure comprises 518 residues: Equilibrative nucleoside transporter 4 (518 aa).

Basic and acidic residues predominate over residues 1 to 10; sequence MGSKGAERRK. The interval 1 to 21 is disordered; the sequence is MGSKGAERRKQATPGQTPEGN. The Extracellular portion of the chain corresponds to 1–66; sequence MGSKGAERRK…EEAVPDDRYH (66 aa). A helical membrane pass occupies residues 67–87; that stretch reads GIYFAMLLAGVGFLLPYNSFI. Residues 88–99 are Cytoplasmic-facing; it reads TDVDYLHHKFEG. The chain crosses the membrane as a helical span at residues 100 to 120; sequence TSIVFDMGLTYILVALVAVIL. The Extracellular portion of the chain corresponds to 121–133; sequence NNVLVEMLSLHTR. A helical membrane pass occupies residues 134–154; sequence ITVGYLFALGPLLFVTIFDVW. Residues 155 to 157 lie on the Cytoplasmic side of the membrane; the sequence is LER. Residues 158-178 form a helical membrane-spanning segment; that stretch reads FTIKQAYVINLMSMGTVAFGC. Residues 179 to 198 lie on the Extracellular side of the membrane; the sequence is TVQQSSFYGYMGMLPKRYTQ. A helical transmembrane segment spans residues 199-218; the sequence is GVMTGESTAGVIISLSRIFT. The Cytoplasmic portion of the chain corresponds to 219 to 229; it reads KLLIKDERKNT. A helical transmembrane segment spans residues 230–250; sequence IIFFVISICMVLVCFILHLLV. Residues 251 to 342 are Extracellular-facing; sequence RRTRFVQYYT…MILHRYVVAR (92 aa). Residues 343-363 form a helical membrane-spanning segment; that stretch reads VIWTYMLSIAVTYFITLCLFP. Over 364 to 376 the chain is Cytoplasmic; the sequence is GLESEIKNATLGE. A helical transmembrane segment spans residues 377–397; that stretch reads WLPILIMAIFNISDFVGKILA. At 398–407 the chain is on the extracellular side; it reads AVPYEWNGTR. A helical membrane pass occupies residues 408–428; the sequence is LLFFSCVRVVFIPLFIMCVYP. The Cytoplasmic segment spans residues 429 to 439; sequence AQMPMFSHPAW. The chain crosses the membrane as a helical span at residues 440 to 460; that stretch reads PCIFSLFMGITNGYFGSVPMI. At 461–476 the chain is on the extracellular side; that stretch reads HAAGKVAPEQRELAGN. Residues 477–497 traverse the membrane as a helical segment; sequence IMTVSYMSGLMLGSVVAYAAY. Residues 498–518 lie on the Cytoplasmic side of the membrane; that stretch reads SFTASGSSFHSQTGYNFTQGY.

It belongs to the SLC29A/ENT transporter (TC 2.A.57) family.

The protein resides in the membrane. Functionally, functions as a polyspecific organic cation transporter, efficiently transporting many organic cations such as monoamine neurotransmitters 1-methyl-4-phenylpyridinium and biogenic amines including serotonin, dopamine, norepinephrine and epinephrine. May play a role in regulating central nervous system homeostasis of monoamine neurotransmitters. May be involved in luminal transport of organic cations in the kidney and seems to use luminal proton gradient to drive organic cation reabsorption. Does not seem to transport nucleoside and nucleoside analogs such as uridine, cytidine, thymidine, adenosine, inosine, guanosine, and azidothymidine. This chain is Equilibrative nucleoside transporter 4 (slc29a4), found in Danio rerio (Zebrafish).